We begin with the raw amino-acid sequence, 375 residues long: Fluoride export protein 2 (375 aa).

At 1–11 (MIFNPVISNHK) the chain is on the cytoplasmic side. The chain crosses the membrane as a helical span at residues 12–32 (LSHYIHVFCTFTTFCILGTET). Topologically, residues 33–34 (RQ) are extracellular. A helical membrane pass occupies residues 35-55 (AITALSTYTPAFVTAPTVLWS). The Cytoplasmic portion of the chain corresponds to 56–79 (NCSSCMLMGIMQSLNAYTWMKDHQ). Residues 80-100 (VLFLGVTTGYCGALSSFSSML) traverse the membrane as a helical segment. The Extracellular portion of the chain corresponds to 101–127 (LEMFEHSTNLTNGNIANHTKLPNRAYG). 2 N-linked (GlcNAc...) asparagine glycosylation sites follow: Asn109 and Asn117. Residues 128 to 148 (IMEFLSVLLVHLMVSMGSLIF) form a helical membrane-spanning segment. The Cytoplasmic segment spans residues 149-213 (GRQLGKEVIV…FKKFFDVVDK (65 aa)). Residues 214–234 (LAYALAFPLIILFVVLCAYYE) form a helical membrane-spanning segment. Asn235 carries an N-linked (GlcNAc...) asparagine glycan. At 235-241 (NYSRGKW) the chain is on the extracellular side. The helical transmembrane segment at 242–262 (TLPCLFGIFAGFLRYWLAEMF) threads the bilayer. Residues 263–268 (NKTNKK) lie on the Cytoplasmic side of the membrane. Residues 269–289 (FPLGTFLANVFATLLIGIFTM) traverse the membrane as a helical segment. Residues 290-310 (VQRGKKHFSTDIPIVNSLNSC) are Extracellular-facing. The helical transmembrane segment at 311–331 (HIVSALISGFCGTLSTISTFI) threads the bilayer. The Cytoplasmic portion of the chain corresponds to 332–338 (NEGYKLS). The chain crosses the membrane as a helical span at residues 339-359 (FINMLIYYTVSIGISYCLLVI). The Extracellular segment spans residues 360–375 (TLGSYAWTRGLTNPIC).

This sequence belongs to the fluoride channel Fluc/FEX (TC 1.A.43) family.

The protein resides in the cell membrane. The catalysed reaction is fluoride(in) = fluoride(out). Fluoride channel required for the rapid expulsion of cytoplasmic fluoride. This chain is Fluoride export protein 2, found in Saccharomyces cerevisiae (strain ATCC 204508 / S288c) (Baker's yeast).